The following is a 144-amino-acid chain: MNFKYIVAVSFLIASAYARSVQNDEQSLSQRDVLEEESLREIRGIGGKILSGLKTALKGAAKELASTYLHRKRTAEEHEVMKRLEAVMRDLDSLDYPEEASERETRGFNQDEIANLFTKKEKRILGPVLSLVGNALGGLIKKIG.

The signal sequence occupies residues 1-18 (MNFKYIVAVSFLIASAYA). Propeptides lie at residues 19 to 43 (RSVQNDEQSLSQRDVLEEESLREIR) and 73 to 122 (RTAE…KKEK). Ile143 bears the Isoleucine amide mark.

Belongs to the bombinin family. Expressed by the skin glands.

Its subcellular location is the secreted. In terms of biological role, maximin-3 shows antibacterial activity against both Gram-positive and Gram-negative bacteria. It also shows antimicrobial activity against the fungus C.albicans, but not against A.flavus nor P.uticale. It has little hemolytic activity. It possess a significant cytotoxicity against tumor cell lines. It possess a significant anti-HIV activity. It shows high spermicidal activity. Maximin-H16 shows antimicrobial activity against bacteria and against the fungus C.albicans. Shows strong hemolytic activity. The protein is Maximins 3/H16 of Bombina maxima (Giant fire-bellied toad).